The chain runs to 262 residues: MENSFKAALKAGRPQIGLWLGLSSSYSAELLAGAGFDWLLIDGEHAPNNVQTVLTQLQAIAPYPNQPVVRPSWNDPVQIKQLLDVGTQTLLVPMVQNADEAREAVRATRYPPAGIRGVGSALARASRWNRIPDYLQKANDQMCVLVQIETREAMKNLPQILDVEGVDGVFIGPADLSADMGYAGNPQHPEVQAAIEQAIVQIRESGKAPGILIANEQLAKRYLELGALFVAVGVDTTLLARAAEALAARFGAQATAVKPGVY.

H45 serves as the catalytic Proton acceptor. A substrate-binding site is contributed by Q147. E149 serves as a coordination point for a divalent metal cation. Substrate-binding residues include A174 and D175. D175 contacts a divalent metal cation.

This sequence belongs to the HpcH/HpaI aldolase family. As to quaternary structure, homohexamer; trimer of dimers. It depends on a divalent metal cation as a cofactor.

The catalysed reaction is 4-hydroxy-2-oxoheptanedioate = succinate semialdehyde + pyruvate. Its pathway is aromatic compound metabolism; 4-hydroxyphenylacetate degradation; pyruvate and succinate semialdehyde from 4-hydroxyphenylacetate: step 7/7. Functionally, catalyzes the reversible retro-aldol cleavage of 4-hydroxy-2-ketoheptane-1,7-dioate (HKHD) to pyruvate and succinic semialdehyde. The protein is 4-hydroxy-2-oxo-heptane-1,7-dioate aldolase of Shigella boydii serotype 18 (strain CDC 3083-94 / BS512).